The chain runs to 326 residues: Large ribosomal subunit protein uL4 (326 aa).

The segment at 1-211 (MASCVVKNWQ…EKLKARWGSG (211 aa)) is large ribosomal subunit protein uL4. 2 disordered regions span residues 44-76 (ARQG…ARAG) and 211-326 (GAAA…EDND). Residues 60-71 (GGRKPWRQKGTG) show a composition bias toward basic residues. The tract at residues 212–326 (AAAAAPTQAD…TAAAEEEDND (115 aa)) is unknown. A compositionally biased stretch (basic and acidic residues) spans 221–238 (DRLEDQAQAAEREARPVE). Low complexity-rich tracts occupy residues 252-279 (EAQA…QVQE) and 294-312 (QGQA…PPAG). Residues 313–326 (EEAETAAAEEEDND) are compositionally biased toward acidic residues.

The protein belongs to the universal ribosomal protein uL4 family. Part of the 50S ribosomal subunit.

Functionally, one of the primary rRNA binding proteins, this protein initially binds near the 5'-end of the 23S rRNA. It is important during the early stages of 50S assembly. It makes multiple contacts with different domains of the 23S rRNA in the assembled 50S subunit and ribosome. Forms part of the polypeptide exit tunnel. In Synechococcus sp. (strain JA-3-3Ab) (Cyanobacteria bacterium Yellowstone A-Prime), this protein is Large ribosomal subunit protein uL4.